The following is a 37-amino-acid chain: Photosystem I reaction center subunit VIII (37 aa).

A helical transmembrane segment spans residues Ser9–Leu29.

Belongs to the PsaI family.

Its subcellular location is the plastid. It is found in the chloroplast thylakoid membrane. May help in the organization of the PsaL subunit. The sequence is that of Photosystem I reaction center subunit VIII from Pelargonium hortorum (Common geranium).